A 519-amino-acid chain; its full sequence is 6-phosphofructo-2-kinase/fructose-2,6-bisphosphatase 2 (519 aa).

A compositionally biased stretch (polar residues) spans 1-17 (MSENSTFSTEDSCNSSY). The tract at residues 1–22 (MSENSTFSTEDSCNSSYKPHAS) is disordered. Ser2 is subject to N-acetylserine. Residues 2-251 (SENSTFSTED…VYYLMNIHVH (250 aa)) form a 6-phosphofructo-2-kinase region. Residue Ser32 is modified to Phosphoserine; by PKA. Residue 48-56 (GLPARGKTY) coordinates ATP. Beta-D-fructose 6-phosphate-binding residues include Arg81 and Arg105. Asp131 is an active-site residue. 2 residues coordinate beta-D-fructose 6-phosphate: Thr133 and Arg139. Residue Cys161 is part of the active site. 170 to 175 (NILEVK) provides a ligand contact to ATP. Lys175, Arg196, and Tyr200 together coordinate beta-D-fructose 6-phosphate. Residues 252 to 519 (PRTIYLCRHG…PKTQVSIPVV (268 aa)) form a fructose-2,6-bisphosphatase region. Position 259 (Arg259) interacts with beta-D-fructose 2,6-bisphosphate. His260 functions as the Tele-phosphohistidine intermediate in the catalytic mechanism. Residues Asn266 and Gly272 each contribute to the beta-D-fructose 2,6-bisphosphate site. Catalysis depends on Glu329, which acts as the Proton donor/acceptor. Residues Tyr340, Arg354, Lys358, Tyr369, Gln395, and Arg399 each contribute to the beta-D-fructose 2,6-bisphosphate site. 351–354 (FALR) lines the ATP pocket. Residues 395-399 (QAVMR) and Tyr431 contribute to the ATP site. The disordered stretch occupies residues 448 to 493 (HRDKPTHNFPKSQTPVRMRRNSFTPLSSSNTIRRPRNYSVGSRPLK). Positions 456 to 479 (FPKSQTPVRMRRNSFTPLSSSNTI) are enriched in polar residues. Ser469 is modified (phosphoserine). Thr471 bears the Phosphothreonine mark. Residue Thr478 is modified to Phosphothreonine; by PKC. 2 positions are modified to phosphoserine: Ser486 and Ser496. The segment at 500–519 (ALDMQEGADQPKTQVSIPVV) is disordered. Positions 510–519 (PKTQVSIPVV) are enriched in polar residues.

This sequence in the C-terminal section; belongs to the phosphoglycerate mutase family. As to quaternary structure, homodimer. Forms a heterodimer with PFKFB3. Post-translationally, phosphorylation by AMPK stimulates activity. As to expression, highest levels in kidney; also found in heart, brain, spleen, lung, liver, skeletal muscle and testis.

The enzyme catalyses beta-D-fructose 2,6-bisphosphate + H2O = beta-D-fructose 6-phosphate + phosphate. It catalyses the reaction beta-D-fructose 6-phosphate + ATP = beta-D-fructose 2,6-bisphosphate + ADP + H(+). Phosphorylation results in the activation of the kinase activity. Synthesis and degradation of fructose 2,6-bisphosphate. This chain is 6-phosphofructo-2-kinase/fructose-2,6-bisphosphatase 2 (Pfkfb2), found in Mus musculus (Mouse).